The chain runs to 589 residues: MSELPPGFAVSPRNQQTFKSHYITNDSSPTCLGLQVDSIASLPYRDPARQEKRLPIRILKMLTAHTSHILHPEYLQPLSSAPVSIELDAKKSPLALLAQTCSQIGKPDPPPSSKLGSLSSSSHGDKDSRSSSSSLKSGEHQNLDDKSSFKPYSKTGSECRKEGAGINSSADKAGFRVPNGSSSSVTCTSLPPHAPSPRASSPQQTSGQSHTHRQSQSPLSQKTAHLQTTHMDSKAAGSDPGNDSSSSGSDRNGKKDSDHNKSSLDVVQIANSSHARASVNSSSASSSSSPQPDSKTDSQPPQPSLGTGHIAPVSPFKPGHSVFPLPSSTMGYHGSIVGAYTGYPSQFVPGLDPAKSSLGMGVPGKHPSSSPLTGASPPSFMQGLCRDPYCLTYPNAPHLGGSNCSSCVHDPSSALKSGFPLMYPTHHLHSLHPSSLSSSATSSLSHPLYTYGFMLPNETLPHACNWVSVGGPCDKRFATSEELLAHLRTHTALPGVDGKLLSGYPSSVSSAASCHLHLPPPSSPGALPSSLSLRGSPGLGLARYHPYGKAHLPGAPSLPMHSLPATAPYYSPYALYSQRLGSASALGYQ.

The disordered stretch occupies residues 102-315 (SQIGKPDPPP…GTGHIAPVSP (214 aa)). Over residues 113-122 (SKLGSLSSSS) the composition is skewed to low complexity. Over residues 137-148 (SGEHQNLDDKSS) the composition is skewed to basic and acidic residues. Residues 179-188 (NGSSSSVTCT) are compositionally biased toward polar residues. The segment covering 196 to 206 (SPRASSPQQTS) has biased composition (low complexity). Positions 214–230 (QSQSPLSQKTAHLQTTH) are enriched in polar residues. Residues 237-250 (GSDPGNDSSSSGSD) show a composition bias toward low complexity. Basic and acidic residues predominate over residues 251 to 262 (RNGKKDSDHNKS). Positions 272–299 (SSHARASVNSSSASSSSSPQPDSKTDSQ) are enriched in low complexity. Residues 408–460 (VHDPSSALKSGFPLMYPTHHLHSLHPSSLSSSATSSLSHPLYTYGFMLPNETL) are required for interaction with Groucho and hdac2 plays an important role in repression of transcription. The C2H2-type zinc-finger motif lies at 462–490 (HACNWVSVGGPCDKRFATSEELLAHLRTH). Residues 498–589 (GKLLSGYPSS…LGSASALGYQ (92 aa)) are required for self-association and nuclear localization.

This sequence belongs to the Elbow/Noc family. Self-associates. Interacts with nlz2. May interact with Groucho corepressor proteins.

Its subcellular location is the nucleus. It is found in the cytoplasm. In terms of biological role, transcriptional corepressor which does not bind directly to DNA and may regulate transcription through recruitment of histone deacetylases to gene promoters. Required for segmental gene expression during hindbrain development. May regulate cell adhesion, migration and proliferation. In Danio rerio (Zebrafish), this protein is Zinc finger protein 703 (znf703).